Consider the following 393-residue polypeptide: Dwarfin sma-3 (393 aa).

The region spanning 10–139 (PAVKKLLGWK…YQRLSRPQGL (130 aa)) is the MH1 domain. 4 residues coordinate Zn(2+): C65, C110, C124, and H129. The tract at residues 136-190 (PQGLNSSMPSPQPISSPNTIWQSSGSSTASCASSPSPSVFSEDGGEVQVHQRPPP) is disordered. Low complexity predominate over residues 141–176 (SSMPSPQPISSPNTIWQSSGSSTASCASSPSPSVFS). The MH2 domain maps to 197-393 (WAQITYFELN…TNLMEPNSMT (197 aa)).

The protein belongs to the dwarfin/SMAD family.

It is found in the cytoplasm. The protein resides in the nucleus. Functionally, involved in TGF-beta pathway. Plays a role in male tail tip morphogenesis. The polypeptide is Dwarfin sma-3 (Caenorhabditis elegans).